A 253-amino-acid chain; its full sequence is 5-oxoprolinase subunit A (253 aa).

Belongs to the LamB/PxpA family. Forms a complex composed of PxpA, PxpB and PxpC.

The enzyme catalyses 5-oxo-L-proline + ATP + 2 H2O = L-glutamate + ADP + phosphate + H(+). Its function is as follows. Catalyzes the cleavage of 5-oxoproline to form L-glutamate coupled to the hydrolysis of ATP to ADP and inorganic phosphate. This chain is 5-oxoprolinase subunit A, found in Bacillus cereus (strain 03BB102).